The primary structure comprises 413 residues: N-acylneuraminate cytidylyltransferase (413 aa).

It belongs to the CMP-NeuNAc synthase family. Mg(2+) is required as a cofactor. The cofactor is Mn(2+).

The protein resides in the cytoplasm. It catalyses the reaction an N-acylneuraminate + CTP = a CMP-N-acyl-beta-neuraminate + diphosphate. Catalyzes the formation of CMP-N-acetylneuraminic acid (CMP-NeuNAc), which is essential for the formation of the capsule. This chain is N-acylneuraminate cytidylyltransferase (neuA), found in Streptococcus agalactiae serotype V (strain ATCC BAA-611 / 2603 V/R).